The primary structure comprises 624 residues: MWSILSIKRSTSRMELMCLNAAECPINVFPEQQRNMPTESLNPGTVLIVGGGPVGLITATTLAKYGVRSVILERNLTTTKWPKMDLTNSRSMEIYQRLGIADALRNVAVPSHYPFTCLFSSGLHADKAITAWDLPSPDEYRRRIREQNDGSMPSEPWLRVSQEIFEAWLKELGMENPLIDFRAGWKVKGARELDHGVEVEAIHSDTGEVWKVSADFVIGCDGAHSAIRKSLEIPLDGGPIHGYAVLVHFKSRDLSRIQKQGQFWHLFFPNAASDGGSIKGAVIAQDEVDTWTVHRFMRPDVDHTQLSSEEIVYDLLGGMGGQPFPIRIDEVLVRSTWTPSVALARSYAGPKHRIFIAGDACHQTVPTGGYGMNTGIADGYDIGWKLAAVIQGWAGPATLLSYEKERRPVGELALQWSKVHMGNLMKMSAELGLDAHMIELNNETGAELRGAMHSYLQTHDGHNQSIGVEMGYRYVSNICVPGALDAELSPPEFHPRKYTPCTMPGYRAPHVYLTTGTPVSRLFGDGFTLVAFPEGEGLNASTEQLREAARKKALPLEVVELPGEMHAHEVWGASLVLVRPDGFVSWHGDSVRSQEEADRIIAQASGFDSEHLGNHVQAQERSAL.

E73 and D359 together coordinate FAD.

Belongs to the paxM FAD-dependent monooxygenase family. FAD is required as a cofactor.

It participates in secondary metabolite biosynthesis. In terms of biological role, FAD-dependent monooxygenase; part of the gene cluster that mediates the biosynthesis of aspyridones. The polyketide-amino acid backbone preaspyridone A is first assembled by the PKS-NRPS hybrid apdA. The assembly of preaspyridone A is initiated by loading of malonyl-CoA onto apdA, followed by decarboxylation to yield the acetyl starter unit. The growing polyketide chain then elongates into a tetraketide. The adpA PKS module catalyzes three Claisen condensations, as well as beta-keto processing and methylation. Alpha-methylation step during polyketide synthesis is a prerequisite and a key checkpoint for chain transfer between PKS and NRPS modules. The downstream NRPS module contains the condensation (C), adenylation (A), and thiolation (T) domains and catalyzes the incorporation of tyrosine via the formation of the L-tyrosinyl-thioester and the amide linkage between L-tyrosinyl-thioester and the tetraketide. The bimodular assembly line is terminated with a reductase (R) domain that facilitates formation and release of the tetramic acid product. Because apdA lacks a designated enoylreductase (ER) domain, the required activity is provided the enoyl reductase apdC. ApdC appears to operate with different stereoselectivity in different PKS cycle. Combined with apdC, apdA is proposed to synthesize preaspyridone A via about 20 enzymatic steps. A number of oxidative steps performed successively by the cytochrome P450 monooxygenases apdE and apdB are required for the conversion of preaspyridone A to aspyridone A. The cytochrome P450 monooxygenase apdE is responsible for the oxidative dephenylation of preaspyridone A. Finally, the predicted FAD-dependent monooxygenase apdD and the acyl-CoA dehydrogenase apdG may be involved in the transformation of aspyridone A into aspyridone B. The sequence is that of FAD-dependent monooxygenase apdD from Emericella nidulans (strain FGSC A4 / ATCC 38163 / CBS 112.46 / NRRL 194 / M139) (Aspergillus nidulans).